The chain runs to 237 residues: MNINPFANVSLQDYLEIVQIVDSTFPIGSFNHSFGMENYLREDTVTDDKGYEEWQEAYLASQFKYGEGLVIKLVYDAMATDNLEQVWHYDKVLTVSTQARETRQGTKMIAKQMLRLIQRLHAIPVLDDYQSKIRKGEVFGNPAIVFALYVFNKGLGCSEAIALYGYSVISTMVQNAVRAIPLGQFAGQEIVLRSFSQLEKMTQEIQELDASYLGANTPGLELAQMKHETQVFRLFMS.

It belongs to the UreF family. In terms of assembly, ureD, UreF and UreG form a complex that acts as a GTP-hydrolysis-dependent molecular chaperone, activating the urease apoprotein by helping to assemble the nickel containing metallocenter of UreC. The UreE protein probably delivers the nickel.

It is found in the cytoplasm. Its function is as follows. Required for maturation of urease via the functional incorporation of the urease nickel metallocenter. The protein is Urease accessory protein UreF of Streptococcus salivarius (strain 57.I).